The primary structure comprises 481 residues: MHMDYHSPYFFGYLLGLIHLLGIVAALHALFTVRTAQGAIAWAMPLLFIPYLTLIPYLIFGARSFYAYIKARRQANQEMHVAMANLNWRPWVEEALTARESESYTALRAMPKLGRMPCLANNQVKLLINGKATFDAIFAAIEKARDVVLVQFFIIHDDTLGKALQQLLLRKAAEGVQVFVLYDRVGSHALPSSYSQVLRDGGVQIHAFATRRGWFNRFQVNFRNHRKIVVVDGLLGFIGGHNVGDEYLGEHPQLSPWRDTHVQISGPVLACLQESFAEDWYWATRQLPPLILPDTYPDNGVLCQALASGPADPQETCSLFFLEAIHSATRRVWITSPYFIPDEAVFAALRLAVLRGVDVRVLIPSRPDHRIVYAASSLFAFEAVRAGVRMFRYQPGFLHQKVVLVDDDVSAIGSANLDNRSFRLNFEITLLTVDRGFADQVEHMLQEDFEQAREITAEDTQDTHRLQQLGMRIARLISPIL.

A run of 2 helical transmembrane segments spans residues phenylalanine 10–leucine 30 and isoleucine 40–phenylalanine 60. 2 PLD phosphodiesterase domains span residues valine 220–tyrosine 247 and glutamine 394–serine 421. Catalysis depends on residues histidine 225, lysine 227, aspartate 232, histidine 399, lysine 401, and aspartate 406.

It belongs to the phospholipase D family. Cardiolipin synthase subfamily. ClsA sub-subfamily.

Its subcellular location is the cell inner membrane. It carries out the reaction 2 a 1,2-diacyl-sn-glycero-3-phospho-(1'-sn-glycerol) = a cardiolipin + glycerol. Its function is as follows. Catalyzes the reversible phosphatidyl group transfer from one phosphatidylglycerol molecule to another to form cardiolipin (CL) (diphosphatidylglycerol) and glycerol. This Pseudomonas putida (strain ATCC 47054 / DSM 6125 / CFBP 8728 / NCIMB 11950 / KT2440) protein is Cardiolipin synthase A.